The sequence spans 787 residues: Exocyst complex component SEC15B (787 aa).

The protein belongs to the SEC15 family. The exocyst complex is composed of SEC3, SEC5, SEC6, SEC8, SEC10, EXO70A1 and EXO84B. Interacts with EXO84B. Binds to EXO70H1 AND EXO70B2. Binds directly to B1L.

It is found in the cytoplasm. The protein localises to the cytosol. The protein resides in the cytoskeleton. It localises to the phragmoplast. Its subcellular location is the secreted. It is found in the cell wall. The protein localises to the extracellular exosome. In terms of biological role, component of the exocyst complex involved in the docking of exocytic vesicles with fusion sites on the plasma membrane during regulated or polarized secretion. Involved in polarized cell growth and organ morphogenesis. During cytokinesis, involved in cell plate initiation, cell plate maturation and formation of new primary cell wall. This Arabidopsis thaliana (Mouse-ear cress) protein is Exocyst complex component SEC15B.